A 1041-amino-acid polypeptide reads, in one-letter code: Pre-mRNA-splicing factor ATP-dependent RNA helicase DHX16 (1041 aa).

Disordered stretches follow at residues 101–207 and 371–391; these read EDSE…AYEE and LQGDEEPSAPPTSTQAQQKES. Phosphoserine is present on residues S103, S106, and S107. A compositionally biased stretch (basic residues) spans 119-130; the sequence is QKKRKKRKHLRK. S160 carries the phosphoserine modification. A compositionally biased stretch (basic and acidic residues) spans 166 to 207; sequence RTERERLQDLEERDAFAERVRQRDKDRTRNVLERSDKKAYEE. Over residues 381-391 the composition is skewed to polar residues; sequence PTSTQAQQKES. A Helicase ATP-binding domain is found at 409–573; it reads LAAIANHQVL…FDDAPVFRIP (165 aa). 422–429 lines the ATP pocket; the sequence is GETGSGKT. A DEAH box motif is present at residues 520-523; that stretch reads DEAH. The 174-residue stretch at 598-771 folds into the Helicase C-terminal domain; it reads SVLQIHVTQP…NVVLLLKSLG (174 aa). T712 bears the Phosphothreonine mark.

The protein belongs to the DEAD box helicase family. DEAH subfamily. DDX16/PRP8 sub-subfamily. Component of pre-catalytic spliceosome complexes. Component of the minor spliceosome, which splices U12-type introns. Interacts with GPKOW. Interacts with TRIM6. Interacts with RIGI. Expressed in the spleen, thyroid and testis. Also expressed in the brain and cerebellum.

The protein resides in the nucleus. It is found in the nucleoplasm. Its subcellular location is the cytoplasm. The enzyme catalyses ATP + H2O = ADP + phosphate + H(+). Required for pre-mRNA splicing as a component of the spliceosome. Contributes to pre-mRNA splicing after spliceosome formation and prior to the first transesterification reaction. As a component of the minor spliceosome, involved in the splicing of U12-type introns in pre-mRNAs. Also plays a role in innate antiviral response by acting as a pattern recognition receptor sensing splicing signals in viral RNA. Mechanistically, TRIM6 promotes the interaction between unanchored 'Lys-48'-polyubiquitin chains and DHX16, leading to DHX16 interaction with RIGI and ssRNA to amplify RIGI-dependent innate antiviral immune responses. In Homo sapiens (Human), this protein is Pre-mRNA-splicing factor ATP-dependent RNA helicase DHX16 (DHX16).